The sequence spans 204 residues: Leucyl/phenylalanyl-tRNA--protein transferase (204 aa).

This sequence belongs to the L/F-transferase family.

It localises to the cytoplasm. It catalyses the reaction N-terminal L-lysyl-[protein] + L-leucyl-tRNA(Leu) = N-terminal L-leucyl-L-lysyl-[protein] + tRNA(Leu) + H(+). The enzyme catalyses N-terminal L-arginyl-[protein] + L-leucyl-tRNA(Leu) = N-terminal L-leucyl-L-arginyl-[protein] + tRNA(Leu) + H(+). It carries out the reaction L-phenylalanyl-tRNA(Phe) + an N-terminal L-alpha-aminoacyl-[protein] = an N-terminal L-phenylalanyl-L-alpha-aminoacyl-[protein] + tRNA(Phe). Functions in the N-end rule pathway of protein degradation where it conjugates Leu, Phe and, less efficiently, Met from aminoacyl-tRNAs to the N-termini of proteins containing an N-terminal arginine or lysine. This chain is Leucyl/phenylalanyl-tRNA--protein transferase, found in Rhizobium etli (strain CIAT 652).